Reading from the N-terminus, the 185-residue chain is DAN domain family member 5 (185 aa).

A signal peptide spans 1-23 (MFRSQFTTLLGLFSGAWLPTGSG). Residue Asn-39 is glycosylated (N-linked (GlcNAc...) asparagine). Intrachain disulfides connect Cys-97–Cys-144, Cys-111–Cys-158, Cys-121–Cys-179, and Cys-125–Cys-181. The region spanning 97 to 182 (CKALSFVQVI…TVLVQKCQCR (86 aa)) is the CTCK domain.

This sequence belongs to the DAN family. In terms of tissue distribution, expressed throughout the neural retina and in the photoreceptor nuclear layer. In the retina, widely expressed in inner nuclear layer, as well as in the ganglion cell layer.

It is found in the secreted. Its function is as follows. Antagonist of the extracellular signaling protein NODAL, which is required for correct left-right patterning during embryonic development. Antagonist of BMP4 signaling. Antagonist of TGF-beta signaling. Independently of its role in left-right axis establishment, plays a role during heart development, possibly through the regulation of TGF-beta/Nodal signaling pathway. Displays anti-angiogenic activity by inhibiting endothelial sprouting, migration, and proliferation. Once internalized by endothelial cells, may alter their redox and glycolytic balance. The protein is DAN domain family member 5 (Dand5) of Mus musculus (Mouse).